Here is a 239-residue protein sequence, read N- to C-terminus: NAD(P)H-hydrate epimerase (239 aa).

One can recognise a YjeF N-terminal domain in the interval A14–I220. N64–D68 serves as a coordination point for (6S)-NADPHX. 2 residues coordinate K(+): N65 and D126. (6S)-NADPHX is bound by residues G130–E136 and D159. A K(+)-binding site is contributed by S162.

The protein belongs to the NnrE/AIBP family. Requires K(+) as cofactor.

The protein resides in the cytoplasm. Its subcellular location is the mitochondrion. The enzyme catalyses (6R)-NADHX = (6S)-NADHX. The catalysed reaction is (6R)-NADPHX = (6S)-NADPHX. Catalyzes the epimerization of the S- and R-forms of NAD(P)HX, a damaged form of NAD(P)H that is a result of enzymatic or heat-dependent hydration. This is a prerequisite for the S-specific NAD(P)H-hydrate dehydratase to allow the repair of both epimers of NAD(P)HX. This is NAD(P)H-hydrate epimerase from Phaeosphaeria nodorum (strain SN15 / ATCC MYA-4574 / FGSC 10173) (Glume blotch fungus).